The chain runs to 156 residues: Cell division protein SepF (156 aa).

A compositionally biased stretch (basic and acidic residues) spans 20–36; it reads AQYGYEKEQTDMKKQQD. Residues 20-50 are disordered; it reads AQYGYEKEQTDMKKQQDPPEQQDVTFPKAQP.

Belongs to the SepF family. In terms of assembly, homodimer. Interacts with FtsZ.

The protein localises to the cytoplasm. Functionally, cell division protein that is part of the divisome complex and is recruited early to the Z-ring. Probably stimulates Z-ring formation, perhaps through the cross-linking of FtsZ protofilaments. Its function overlaps with FtsA. The protein is Cell division protein SepF of Bacillus cereus (strain G9842).